A 115-amino-acid chain; its full sequence is U3-lycotoxin-Ls1r (115 aa).

Positions 1–20 are cleaved as a signal peptide; that stretch reads MKFVLLFGVLLVTLFSYSSA. The propeptide occupies 21–44; it reads EMLDDFHQADEDELVSLIKKEEAR. 4 disulfide bridges follow: C48-C63, C55-C72, C62-C87, and C74-C85.

The protein belongs to the neurotoxin 19 (CSTX) family. 01 subfamily. In terms of tissue distribution, expressed by the venom gland.

It is found in the secreted. In Lycosa singoriensis (Wolf spider), this protein is U3-lycotoxin-Ls1r.